We begin with the raw amino-acid sequence, 553 residues long: Glucose-6-phosphate isomerase (553 aa).

The active-site Proton donor is the glutamate 355. Residues histidine 386 and lysine 513 contribute to the active site.

This sequence belongs to the GPI family.

It localises to the cytoplasm. The enzyme catalyses alpha-D-glucose 6-phosphate = beta-D-fructose 6-phosphate. It functions in the pathway carbohydrate biosynthesis; gluconeogenesis. It participates in carbohydrate degradation; glycolysis; D-glyceraldehyde 3-phosphate and glycerone phosphate from D-glucose: step 2/4. Its function is as follows. Catalyzes the reversible isomerization of glucose-6-phosphate to fructose-6-phosphate. The polypeptide is Glucose-6-phosphate isomerase (Baumannia cicadellinicola subsp. Homalodisca coagulata).